A 594-amino-acid chain; its full sequence is Arginine--tRNA ligase (594 aa).

Residues 139–149 carry the 'HIGH' region motif; it reads ANPTGPLHVGH.

Belongs to the class-I aminoacyl-tRNA synthetase family. Monomer.

It localises to the cytoplasm. The enzyme catalyses tRNA(Arg) + L-arginine + ATP = L-arginyl-tRNA(Arg) + AMP + diphosphate. This is Arginine--tRNA ligase from Burkholderia thailandensis (strain ATCC 700388 / DSM 13276 / CCUG 48851 / CIP 106301 / E264).